The sequence spans 338 residues: Malate dehydrogenase, mitochondrial (338 aa).

Residues 1–24 (MLSALARPAGAALRRSFSTSAQNN) constitute a mitochondrion transit peptide. NAD(+) is bound by residues 31–37 (GASGGIG) and aspartate 57. The O-linked (GlcNAc) serine glycan is linked to serine 33. 2 positions are modified to N6-acetyllysine; alternate: lysine 78 and lysine 91. Lysine 78 and lysine 91 each carry N6-succinyllysine; alternate. Residues arginine 104 and arginine 110 each contribute to the substrate site. NAD(+)-binding positions include asparagine 117 and 140–142 (ISN). Asparagine 142 serves as a coordination point for substrate. Lysine 165 bears the N6-acetyllysine mark. Arginine 176 contributes to the substrate binding site. Residue lysine 185 is modified to N6-acetyllysine; alternate. Position 185 is an N6-succinyllysine; alternate (lysine 185). Histidine 200 acts as the Proton acceptor in catalysis. Lysine 203 carries the post-translational modification N6-succinyllysine. Residues lysine 215 and lysine 239 each carry the N6-acetyllysine; alternate modification. N6-succinyllysine; alternate is present on residues lysine 215 and lysine 239. Lysine 239 bears the N6-malonyllysine; alternate mark. Serine 246 is modified (phosphoserine). An NAD(+)-binding site is contributed by methionine 251. Lysine 269 bears the N6-succinyllysine mark. Residues lysine 296, lysine 301, lysine 307, lysine 314, and lysine 324 each carry the N6-acetyllysine; alternate modification. N6-succinyllysine; alternate occurs at positions 296, 301, 307, 314, and 324. Residue lysine 307 is modified to N6-malonyllysine; alternate. Serine 326 is modified (phosphoserine). N6-acetyllysine; alternate occurs at positions 328, 329, and 335. N6-succinyllysine; alternate is present on lysine 328. Lysine 329 carries the post-translational modification N6-malonyllysine; alternate. Lysine 335 carries the N6-succinyllysine; alternate modification.

Belongs to the LDH/MDH superfamily. MDH type 1 family. In terms of assembly, homodimer. Acetylation is enhanced after treatment either with trichostin A (TCA) or with nicotinamide (NAM) with the appearance of tri- and tetraacetylations. Glucose also increases acetylation.

It is found in the mitochondrion matrix. It carries out the reaction (S)-malate + NAD(+) = oxaloacetate + NADH + H(+). Its activity is regulated as follows. Enzyme activity is enhanced by acetylation. The chain is Malate dehydrogenase, mitochondrial (MDH2) from Bos taurus (Bovine).